The primary structure comprises 131 residues: Methylglyoxal synthase (131 aa).

The MGS-like domain maps to 1–131; sequence MKIALIAHDK…GDLDYRKLRK (131 aa). Substrate is bound by residues H8, K12, 34-37, and 54-55; these read TGTT and SG. The Proton donor/acceptor role is filled by D60. H87 contacts substrate.

This sequence belongs to the methylglyoxal synthase family.

It catalyses the reaction dihydroxyacetone phosphate = methylglyoxal + phosphate. In terms of biological role, catalyzes the formation of methylglyoxal from dihydroxyacetone phosphate. This is Methylglyoxal synthase from Bacillus cereus (strain ATCC 10987 / NRS 248).